Here is a 1200-residue protein sequence, read N- to C-terminus: ATP-dependent helicase/deoxyribonuclease subunit B (1200 aa).

Belongs to the helicase family. AddB/RexB type 2 subfamily. Heterodimer of AddA and RexB. Mg(2+) is required as a cofactor.

In terms of biological role, the heterodimer acts as both an ATP-dependent DNA helicase and an ATP-dependent, dual-direction single-stranded exonuclease. Recognizes the chi site generating a DNA molecule suitable for the initiation of homologous recombination. This subunit has 5' -&gt; 3' nuclease activity but not helicase activity. The chain is ATP-dependent helicase/deoxyribonuclease subunit B from Lactiplantibacillus plantarum (strain ATCC BAA-793 / NCIMB 8826 / WCFS1) (Lactobacillus plantarum).